The following is a 398-amino-acid chain: MAGGPHFIRKNGWVDENRPTRVLLLGSTGSIGTQALEVVAANPDKFTVVGLAAGGANVELLDRQIRETGVSSVAVADPSAAASLARPGVLSGPDAVTELVRTTEADVVLNALVGSLGLEPTLAALESGARLALANKESLVAGGPLVTAAAAPGQIVPVDSEHSALAQCLRGGSADEVDRLVLTASGGPFRGWTADRLESVTPEQAGAHPTWSMGPMNTLNSATLVNKGLELIETHLLFGVDYDRIDVTVHPQSIVHSMVTFTDGSTLAQASPPDMKLPIALALGWPHRIAGAAAACDFSTASTWDFEPLDSQVFPAVDLAREAGKGGGCLTAVYNAANEVAAQAFLDGIIRFPRIVRTVASVLSEADEWSAPPATVEDVLAADGWARERARQLVKQEG.

NADPH is bound by residues Thr-28, Gly-29, Ser-30, Ile-31, Gly-54, Asn-57, and Asn-135. 1-deoxy-D-xylulose 5-phosphate is bound at residue Lys-136. Residue Glu-137 coordinates NADPH. Position 159 (Asp-159) interacts with Mn(2+). Ser-160, Glu-161, Ser-185, and His-208 together coordinate 1-deoxy-D-xylulose 5-phosphate. Mn(2+) is bound at residue Glu-161. Gly-214 is an NADPH binding site. Residues Ser-221, Asn-226, Lys-227, and Glu-230 each coordinate 1-deoxy-D-xylulose 5-phosphate. Glu-230 is a Mn(2+) binding site.

Belongs to the DXR family. Requires Mg(2+) as cofactor. The cofactor is Mn(2+).

The catalysed reaction is 2-C-methyl-D-erythritol 4-phosphate + NADP(+) = 1-deoxy-D-xylulose 5-phosphate + NADPH + H(+). It functions in the pathway isoprenoid biosynthesis; isopentenyl diphosphate biosynthesis via DXP pathway; isopentenyl diphosphate from 1-deoxy-D-xylulose 5-phosphate: step 1/6. In terms of biological role, catalyzes the NADPH-dependent rearrangement and reduction of 1-deoxy-D-xylulose-5-phosphate (DXP) to 2-C-methyl-D-erythritol 4-phosphate (MEP). The protein is 1-deoxy-D-xylulose 5-phosphate reductoisomerase of Rhodococcus jostii (strain RHA1).